The sequence spans 934 residues: 2-oxoglutarate dehydrogenase E1 component (934 aa).

It belongs to the alpha-ketoglutarate dehydrogenase family. As to quaternary structure, homodimer. Part of the 2-oxoglutarate dehydrogenase (OGDH) complex composed of E1 (2-oxoglutarate dehydrogenase), E2 (dihydrolipoamide succinyltransferase) and E3 (dihydrolipoamide dehydrogenase); the complex contains multiple copies of the three enzymatic components (E1, E2 and E3). Requires thiamine diphosphate as cofactor.

The catalysed reaction is N(6)-[(R)-lipoyl]-L-lysyl-[protein] + 2-oxoglutarate + H(+) = N(6)-[(R)-S(8)-succinyldihydrolipoyl]-L-lysyl-[protein] + CO2. E1 component of the 2-oxoglutarate dehydrogenase (OGDH) complex which catalyzes the decarboxylation of 2-oxoglutarate, the first step in the conversion of 2-oxoglutarate to succinyl-CoA and CO(2). The chain is 2-oxoglutarate dehydrogenase E1 component from Staphylococcus epidermidis (strain ATCC 35984 / DSM 28319 / BCRC 17069 / CCUG 31568 / BM 3577 / RP62A).